Here is a 233-residue protein sequence, read N- to C-terminus: MGEEDTATVDQNSFGGGKDSLLRNRHSSPLPSPTQLSSKVITLPTVLTLGRVAAVPILVATFYVDCWWGRTATTSIFIAAAITDWLDGYIARKMRLGSEFGAFLDPVADKLMVAATLILLCTKPMVAVVLGPVPWLVTVPSIAIIGREITMSAVREWAASQNGKLSEAVAVNSLGKWKTATQMIALTILLASRDSSFERLLPSGIGLLYVSAGLSIWSLVVYMRKIWRVLLKK.

Residues 1-23 are disordered; that stretch reads MGEEDTATVDQNSFGGGKDSLLR. 5 consecutive transmembrane segments (helical) span residues 40–60, 71–91, 100–120, 125–145, and 201–221; these read VITLPTVLTLGRVAAVPILVA, TATTSIFIAAAITDWLDGYIA, FGAFLDPVADKLMVAATLILL, MVAVVLGPVPWLVTVPSIAII, and LPSGIGLLYVSAGLSIWSLVV.

It belongs to the CDP-alcohol phosphatidyltransferase class-I family. Mn(2+) serves as cofactor.

Its subcellular location is the microsome membrane. The protein localises to the endoplasmic reticulum membrane. The catalysed reaction is a CDP-1,2-diacyl-sn-glycerol + sn-glycerol 3-phosphate = a 1,2-diacyl-sn-glycero-3-phospho-(1'-sn-glycero-3'-phosphate) + CMP + H(+). The protein operates within phospholipid metabolism; phosphatidylglycerol biosynthesis; phosphatidylglycerol from CDP-diacylglycerol: step 1/2. Catalyzes the committed step to the synthesis of the acidic phospholipids, including phosphatidylglycerol (PG). Together with PGPS1, required for the proper embryo development by providing PG accurate levels. The polypeptide is CDP-diacylglycerol--glycerol-3-phosphate 3-phosphatidyltransferase 2 (Arabidopsis thaliana (Mouse-ear cress)).